The chain runs to 471 residues: ATP synthase subunit beta (471 aa).

Residue 153-160 (GGAGVGKT) participates in ATP binding.

This sequence belongs to the ATPase alpha/beta chains family. As to quaternary structure, F-type ATPases have 2 components, CF(1) - the catalytic core - and CF(0) - the membrane proton channel. CF(1) has five subunits: alpha(3), beta(3), gamma(1), delta(1), epsilon(1). CF(0) has four main subunits: a(1), b(1), b'(1) and c(9-12).

It localises to the cell membrane. The catalysed reaction is ATP + H2O + 4 H(+)(in) = ADP + phosphate + 5 H(+)(out). In terms of biological role, produces ATP from ADP in the presence of a proton gradient across the membrane. The catalytic sites are hosted primarily by the beta subunits. In Chloroflexus aurantiacus (strain ATCC 29364 / DSM 637 / Y-400-fl), this protein is ATP synthase subunit beta.